The primary structure comprises 245 residues: 8-amino-3,8-dideoxy-manno-octulosonate cytidylyltransferase (245 aa).

Belongs to the KdsB family.

The protein localises to the cytoplasm. It catalyses the reaction 8-amino-3,8-dideoxy-alpha-D-manno-octulosonate + CTP = CMP-8-amino-3,8-dideoxy-alpha-D-manno-oct-2-ulosonate + diphosphate. It participates in bacterial outer membrane biogenesis; lipopolysaccharide biosynthesis. Functionally, activates KDO8N (a required 8-carbon sugar) for incorporation into bacterial lipopolysaccharide in the Shewanella genus. This chain is 8-amino-3,8-dideoxy-manno-octulosonate cytidylyltransferase, found in Shewanella sediminis (strain HAW-EB3).